We begin with the raw amino-acid sequence, 140 residues long: uncharacterized protein (140 aa).

Positions 62–140 (TEARAGRGGP…PQGRWGPSLG (79 aa)) are disordered. Residues 71–94 (PATARSRVSADSQGGRAGSSSPSS) show a composition bias toward low complexity.

This is an uncharacterized protein from Homo sapiens (Human).